Consider the following 103-residue polypeptide: Small ribosomal subunit protein eS24 (103 aa).

Belongs to the eukaryotic ribosomal protein eS24 family.

This chain is Small ribosomal subunit protein eS24, found in Methanococcus maripaludis (strain C6 / ATCC BAA-1332).